A 498-amino-acid chain; its full sequence is Serine hydroxymethyltransferase, mitochondrial (498 aa).

N6-(pyridoxal phosphate)lysine is present on lysine 273.

It belongs to the SHMT family. In terms of assembly, homotetramer. Pyridoxal 5'-phosphate serves as cofactor.

It is found in the mitochondrion. The catalysed reaction is (6R)-5,10-methylene-5,6,7,8-tetrahydrofolate + glycine + H2O = (6S)-5,6,7,8-tetrahydrofolate + L-serine. It functions in the pathway one-carbon metabolism; tetrahydrofolate interconversion. In terms of biological role, interconversion of serine and glycine. The polypeptide is Serine hydroxymethyltransferase, mitochondrial (SHM1) (Kluyveromyces lactis (strain ATCC 8585 / CBS 2359 / DSM 70799 / NBRC 1267 / NRRL Y-1140 / WM37) (Yeast)).